The following is a 71-amino-acid chain: Small ribosomal subunit protein bS18 (71 aa).

This sequence belongs to the bacterial ribosomal protein bS18 family. In terms of assembly, part of the 30S ribosomal subunit. Forms a tight heterodimer with protein bS6.

Functionally, binds as a heterodimer with protein bS6 to the central domain of the 16S rRNA, where it helps stabilize the platform of the 30S subunit. The chain is Small ribosomal subunit protein bS18 from Nostoc punctiforme (strain ATCC 29133 / PCC 73102).